We begin with the raw amino-acid sequence, 116 residues long: Iron-sulfur cluster assembly protein CyaY (116 aa).

The protein belongs to the frataxin family.

Functionally, involved in iron-sulfur (Fe-S) cluster assembly. May act as a regulator of Fe-S biogenesis. This Polaromonas sp. (strain JS666 / ATCC BAA-500) protein is Iron-sulfur cluster assembly protein CyaY.